Consider the following 277-residue polypeptide: Carbonyl reductase [NADPH] 1 (277 aa).

Residues 10-34 (VTGA…GDVL), 63-64 (DI), and Asn-90 contribute to the NADP(+) site. Phosphoserine is present on Ser-30. Glutathione contacts are provided by residues 95 to 97 (FKM) and Gln-106. Ser-140 serves as a coordination point for substrate. Glutathione is bound at residue 193–194 (AY). Tyr-194 (proton acceptor) is an active-site residue. NADP(+)-binding positions include 194 to 198 (YGVTK) and 231 to 233 (VRT).

The protein belongs to the short-chain dehydrogenases/reductases (SDR) family. In terms of assembly, monomer. In terms of tissue distribution, present in liver and kidney.

The protein localises to the cytoplasm. The catalysed reaction is a secondary alcohol + NADP(+) = a ketone + NADPH + H(+). The enzyme catalyses prostaglandin F2alpha + NADP(+) = prostaglandin E2 + NADPH + H(+). It catalyses the reaction prostaglandin E1 + NADP(+) = 15-oxoprostaglandin E1 + NADPH + H(+). It carries out the reaction menadione + NADPH + H(+) = menadiol + NADP(+). The catalysed reaction is prostaglandin D2 + NADP(+) = 15-oxoprostaglandin D2 + NADPH + H(+). The enzyme catalyses prostaglandin E2 + NADP(+) = 15-oxoprostaglandin E2 + NADPH + H(+). It catalyses the reaction prostaglandin F2alpha + NADP(+) = 15-oxoprostaglandin F2alpha + NADPH + H(+). It carries out the reaction daunorubicin + NADPH + H(+) = 13-dihydrodaunorubicin + NADP(+). The catalysed reaction is S-nitrosoglutathione + NADPH + H(+) = S-(hydroxysulfenamide)glutathione + NADP(+). The enzyme catalyses a primary alcohol + NADP(+) = an aldehyde + NADPH + H(+). It catalyses the reaction cortisol + NADPH + H(+) = 20beta-dihydrocortisol + NADP(+). It carries out the reaction corticosterone + NADPH + H(+) = 20beta-dihydrocorticosterone + NADP(+). Functionally, NADPH-dependent reductase with broad substrate specificity. Catalyzes the reduction of a wide variety of carbonyl compounds including quinones, prostaglandins, menadione, plus various xenobiotics. Catalyzes the reduction of the antitumor anthracyclines doxorubicin and daunorubicin to the cardiotoxic compounds doxorubicinol and daunorubicinol. Can convert prostaglandin E to prostaglandin F2-alpha. Can bind glutathione, which explains its higher affinity for glutathione-conjugated substrates. Catalyzes the reduction of S-nitrosoglutathione. In addition, participates in the glucocorticoid metabolism by catalyzing the NADPH-dependent cortisol/corticosterone into 20beta-dihydrocortisol (20b-DHF) or 20beta-corticosterone (20b-DHB), which are weak agonists of NR3C1 and NR3C2 in adipose tissue. This chain is Carbonyl reductase [NADPH] 1, found in Oryctolagus cuniculus (Rabbit).